The chain runs to 690 residues: MSAILQYDSVSKGTYSVKPKPTESLGNEFSEGLFVPLIGGKEPIEYVKLRENLCTKVLNELEEITTHTTYDSNARVLRQLCEHASEPVDETGLLRTAIVCDKSSNSMHLKFYEQLKDDMEKIGWKNFVVLNLKAHRDLKSCFRVIKGGSFGLGVLSYDIEKLDEKTVLVLEDVEDCDRRLLSSLVEALSSLVRHSKLQGCLYTIFNLKIPLEMFDTSLDSKFLSNVKTKVFNMKASTEILESLFTSIEESLSLKFGWRTRRFFRSMFYERSWSVERVIECIRYSILTHFYGNALSIIEHLIYQKDFHLISPLHLTTLRTVPSFQRHIEQRLEIGDLESINYVEKMLNDDTYFQEMVIQMCENLLYRERLLRTQAKIWHELEMAVKTTTRISFADYLETFLQGDWLSSPQYKSICQAILRMNSTKALACLDYLNENIFTGNQTMKCLEIHQELSELIRNSSTNYLEPVEVRMQNYSGTKHTRKVVESGFDKSIIDFSKILKKIVGLLDEEVQYGCLGTESIDMYPFYEVLFYDYCRPLNQAFASGHQRSVIHSSCMDPEYYVGDEKKIDSEFSNAEKDGKDLISWLPDLSILYKLYSESGALLNLYDWYIAFSEHLQAGKENLKEDDNHPRESPQGNLQRELNELDEDKRKLEEAKLQSRFLFGLEELRFLGLIKPTARKTDHVMKTIYHQ.

The protein belongs to the ORC3 family. As to quaternary structure, ORC is composed of six subunits. ORC interacts with cdc18, recruiting it to the ars1 origin of replication.

It localises to the nucleus. In terms of biological role, component of the origin recognition complex (ORC) that binds origins of replication. It has a role in both chromosomal replication and mating type transcriptional silencing. ORC binds to multiple sites within the ars1 origin of DNA replication in an ATP-independent manner. The chain is Origin recognition complex subunit 3 (orc3) from Schizosaccharomyces pombe (strain 972 / ATCC 24843) (Fission yeast).